A 414-amino-acid polypeptide reads, in one-letter code: uncharacterized protein (414 aa).

Disordered stretches follow at residues 136-168 (SSKS…TVPT), 297-333 (PQNF…ENAS), and 346-414 (ALNA…NGSK). Over residues 350-359 (PSRSRPTHGS) the composition is skewed to polar residues. The span at 399 to 414 (SKSEKIYPEPRRNGSK) shows a compositional bias: basic and acidic residues.

This is an uncharacterized protein from Homo sapiens (Human).